Reading from the N-terminus, the 570-residue chain is Urease subunit alpha (570 aa).

The region spanning 131–570 (GGFDSHIHFI…LPLAQRYFMF (440 aa)) is the Urease domain. Residues His136, His138, and Lys219 each coordinate Ni(2+). Lys219 carries the N6-carboxylysine modification. His221 is a binding site for substrate. Residues His248 and His274 each contribute to the Ni(2+) site. The active-site Proton donor is His322. Position 362 (Asp362) interacts with Ni(2+).

This sequence belongs to the metallo-dependent hydrolases superfamily. Urease alpha subunit family. Heterotrimer of UreA (gamma), UreB (beta) and UreC (alpha) subunits. Three heterotrimers associate to form the active enzyme. The cofactor is Ni cation. In terms of processing, carboxylation allows a single lysine to coordinate two nickel ions.

The protein localises to the cytoplasm. It carries out the reaction urea + 2 H2O + H(+) = hydrogencarbonate + 2 NH4(+). It functions in the pathway nitrogen metabolism; urea degradation; CO(2) and NH(3) from urea (urease route): step 1/1. The protein is Urease subunit alpha of Rhodopseudomonas palustris (strain TIE-1).